Here is a 372-residue protein sequence, read N- to C-terminus: Integral membrane protein GPR137B (372 aa).

The Lumenal portion of the chain corresponds to 1-32 (MESPAWDATKNDSLPPTLTPAVPPYVKLGLTT). Asparagine 11 carries an N-linked (GlcNAc...) asparagine glycan. A helical membrane pass occupies residues 33–53 (VYTIFYLLLFAFVYVQLWLVL). Over 54–64 (HYKHKRFSYQT) the chain is Cytoplasmic. Residues 65-85 (VFLFLCLLWASLRAVLFSFYF) form a helical membrane-spanning segment. At 86-93 (RNFVEANR) the chain is on the lumenal side. A helical transmembrane segment spans residues 94–114 (LGAFTFWLLYCFPVCLQFFTL). The Cytoplasmic segment spans residues 115–144 (TLMNLYFARVIYKAKSKYLPELIKYRLPLY). The chain crosses the membrane as a helical span at residues 145-165 (LAFLVISLLFLVVNLTCAILV). The Lumenal segment spans residues 166–173 (KTDYAETK). Residues 174–194 (VIVSIRVAINDTLFVLCAVSL) form a helical membrane-spanning segment. Residues 195 to 222 (SVCLYKISKMSLAGVYLESKGSSVCQVT) are Cytoplasmic-facing. The helical transmembrane segment at 223-243 (CIGVTVILLYTSRACYNLVVL) threads the bilayer. The Lumenal portion of the chain corresponds to 244–276 (SLSDSRYSSFDYDWYNVSDQADLKCKLGDAGYV). Asparagine 259 carries N-linked (GlcNAc...) asparagine glycosylation. A helical transmembrane segment spans residues 277 to 297 (VFGIILFIWELFPTSLVVYFF). The Cytoplasmic segment spans residues 298 to 372 (RVRNSAQDMT…QTGSLQRDST (75 aa)).

Belongs to the GPR137 family.

It localises to the lysosome membrane. Lysosomal integral membrane protein that regulates the localization and activity of mTORC1, a signaling complex promoting cell growth in response to growth factors, energy levels, and amino acids. Interacts with Rag GTPases and increases the lysosomial localization and activity of Rag GTPases and thereby regulates mTORC1 translocation and activity in lysosome. Involved in the regulation of lysosomal morphology and autophagy. Also acts as a negative regulator of osteoclast activity. In terms of biological role, also acts as a negative regulator of osteoclast activity. This Xenopus laevis (African clawed frog) protein is Integral membrane protein GPR137B (gpr137b).